Reading from the N-terminus, the 371-residue chain is Cytochrome b (371 aa).

Helical transmembrane passes span 25-45 (FGSM…FLAV), 69-90 (WMMQ…YIHI), 105-125 (WMSG…GYVL), and 170-190 (FFAL…LHVI). His-75 and His-89 together coordinate heme b. The heme b site is built by His-174 and His-188. His-193 provides a ligand contact to a ubiquinone. The next 4 helical transmembrane spans lie at 218-238 (HKDL…VSFF), 280-300 (LGGA…PFTH), 312-332 (LSQL…WAAT), and 339-358 (FITI…LSIP).

Belongs to the cytochrome b family. In terms of assembly, the cytochrome bc1 complex contains 3 respiratory subunits (MT-CYB, CYC1 and UQCRFS1), 2 core proteins (UQCRC1 and UQCRC2) and probably 6 low-molecular weight proteins. It depends on heme b as a cofactor.

It is found in the mitochondrion inner membrane. Functionally, component of the ubiquinol-cytochrome c reductase complex (complex III or cytochrome b-c1 complex) that is part of the mitochondrial respiratory chain. The b-c1 complex mediates electron transfer from ubiquinol to cytochrome c. Contributes to the generation of a proton gradient across the mitochondrial membrane that is then used for ATP synthesis. This chain is Cytochrome b (MT-CYB), found in Liasis mackloti savuensis (Savu python).